A 525-amino-acid chain; its full sequence is ATP synthase subunit alpha (525 aa).

169–176 (GDRQTGKT) lines the ATP pocket.

Belongs to the ATPase alpha/beta chains family. In terms of assembly, F-type ATPases have 2 components, CF(1) - the catalytic core - and CF(0) - the membrane proton channel. CF(1) has five subunits: alpha(3), beta(3), gamma(1), delta(1), epsilon(1). CF(0) has three main subunits: a(1), b(2) and c(9-12). The alpha and beta chains form an alternating ring which encloses part of the gamma chain. CF(1) is attached to CF(0) by a central stalk formed by the gamma and epsilon chains, while a peripheral stalk is formed by the delta and b chains.

Its subcellular location is the cell membrane. The enzyme catalyses ATP + H2O + 4 H(+)(in) = ADP + phosphate + 5 H(+)(out). Functionally, produces ATP from ADP in the presence of a proton gradient across the membrane. The alpha chain is a regulatory subunit. This is ATP synthase subunit alpha from Mycoplasma mycoides subsp. mycoides SC (strain CCUG 32753 / NCTC 10114 / PG1).